Here is a 236-residue protein sequence, read N- to C-terminus: Small ribosomal subunit protein uS3 (236 aa).

Residues 39–107 (VREFLKKKLA…PVHLNIEEVR (69 aa)) enclose the KH type-2 domain. The disordered stretch occupies residues 215 to 236 (AAQPAEPEKKVRKSGAKNAATS).

Belongs to the universal ribosomal protein uS3 family. In terms of assembly, part of the 30S ribosomal subunit. Forms a tight complex with proteins S10 and S14.

Functionally, binds the lower part of the 30S subunit head. Binds mRNA in the 70S ribosome, positioning it for translation. The chain is Small ribosomal subunit protein uS3 from Methylobacillus flagellatus (strain ATCC 51484 / DSM 6875 / VKM B-1610 / KT).